A 355-amino-acid chain; its full sequence is MLIGEIMDLNLKNFLEDREEIIRDAKRKDEKSFKDFKKIVEEIKERENKDKIVCDFTEYNPLHKGHKYALEKGKEHGIFISVLPGPLERSGRGIPYFLNRYIRAEMAIRAGADIVVEGPPMGIMGSGQYMRCLIKMFYSLGAEIIPRGYIPEKTMEKVIDCINKGYHIQVKPYKIICIETGEILGEKLNIDNYVIASMSQMIYKLNREGLKFNPKFVFVKRLEGISGTKIREAIFSGKFEDIKNMLPKTTLSILKELYDNGKLNELILKRFEDRILETANEYDLYEYLPSNVAEILEKKRPFNNIEEIKNSLPYGFSRHFRERILSKLEARIPNETLSKYINNYPAKIKILAVKL.

Belongs to the TmcAL family.

This is an uncharacterized protein from Methanocaldococcus jannaschii (strain ATCC 43067 / DSM 2661 / JAL-1 / JCM 10045 / NBRC 100440) (Methanococcus jannaschii).